We begin with the raw amino-acid sequence, 184 residues long: MGVRNFIDRVFTVISDLILKLLPASKQEKQAFAYYKAGMAAQAEGDYAEALENYYESLYLDEDQYDRSYTLYNIGLIYAKNENYPRALEYYHQAVSLNSNLPQALNNIAAIYHRQGLLALEMASQDYDAEMEISEEYEYIELAKGLFDKAAEYWYQALKLAPDNYPRARNWLRITGRAKSLDSF.

3 TPR repeats span residues 31 to 64 (AFAY…DEDQ), 68 to 101 (SYTL…NSNL), and 131 to 164 (MEIS…APDN).

This sequence belongs to the Ycf3 family.

The protein localises to the plastid. It localises to the chloroplast thylakoid membrane. Its function is as follows. Essential for the assembly of the photosystem I (PSI) complex. May act as a chaperone-like factor to guide the assembly of the PSI subunits. The sequence is that of Photosystem I assembly protein Ycf3 from Thalassiosira pseudonana (Marine diatom).